We begin with the raw amino-acid sequence, 242 residues long: Ribosomal RNA small subunit methyltransferase G (242 aa).

Residues G78, L83, 130–131, and R151 each bind S-adenosyl-L-methionine; that span reads AE.

Belongs to the methyltransferase superfamily. RNA methyltransferase RsmG family.

It localises to the cytoplasm. In terms of biological role, specifically methylates the N7 position of guanine in position 518 of 16S rRNA. This chain is Ribosomal RNA small subunit methyltransferase G, found in Salinispora arenicola (strain CNS-205).